Here is a 171-residue protein sequence, read N- to C-terminus: Small ribosomal subunit protein mS25 (171 aa).

Belongs to the mitochondrion-specific ribosomal protein mS25 family. In terms of assembly, component of the mitochondrial ribosome small subunit (28S) which comprises a 12S rRNA and about 30 distinct proteins.

The protein localises to the mitochondrion. The polypeptide is Small ribosomal subunit protein mS25 (Mrps25) (Mus musculus (Mouse)).